The sequence spans 149 residues: Deoxyuridine 5'-triphosphate nucleotidohydrolase (149 aa).

Residues 68 to 70 (RSG), N81, 85 to 87 (LID), and M95 each bind substrate.

The protein belongs to the dUTPase family. Mg(2+) serves as cofactor.

The catalysed reaction is dUTP + H2O = dUMP + diphosphate + H(+). The protein operates within pyrimidine metabolism; dUMP biosynthesis; dUMP from dCTP (dUTP route): step 2/2. In terms of biological role, this enzyme is involved in nucleotide metabolism: it produces dUMP, the immediate precursor of thymidine nucleotides and it decreases the intracellular concentration of dUTP so that uracil cannot be incorporated into DNA. This is Deoxyuridine 5'-triphosphate nucleotidohydrolase from Herminiimonas arsenicoxydans.